We begin with the raw amino-acid sequence, 317 residues long: Aspartate carbamoyltransferase catalytic subunit (317 aa).

The carbamoyl phosphate site is built by Arg-55 and Thr-56. Lys-83 provides a ligand contact to L-aspartate. The carbamoyl phosphate site is built by Arg-105, His-138, and Gln-141. L-aspartate is bound by residues Arg-171 and Arg-225. Gly-266 and Pro-267 together coordinate carbamoyl phosphate.

Belongs to the aspartate/ornithine carbamoyltransferase superfamily. ATCase family. Heterododecamer (2C3:3R2) of six catalytic PyrB chains organized as two trimers (C3), and six regulatory PyrI chains organized as three dimers (R2).

The enzyme catalyses carbamoyl phosphate + L-aspartate = N-carbamoyl-L-aspartate + phosphate + H(+). It functions in the pathway pyrimidine metabolism; UMP biosynthesis via de novo pathway; (S)-dihydroorotate from bicarbonate: step 2/3. Catalyzes the condensation of carbamoyl phosphate and aspartate to form carbamoyl aspartate and inorganic phosphate, the committed step in the de novo pyrimidine nucleotide biosynthesis pathway. In Mycobacteroides abscessus (strain ATCC 19977 / DSM 44196 / CCUG 20993 / CIP 104536 / JCM 13569 / NCTC 13031 / TMC 1543 / L948) (Mycobacterium abscessus), this protein is Aspartate carbamoyltransferase catalytic subunit.